The primary structure comprises 200 residues: Nucleoside triphosphate pyrophosphatase (200 aa).

Residue Asp-79 is the Proton acceptor of the active site.

This sequence belongs to the Maf family. The cofactor is a divalent metal cation.

It is found in the cytoplasm. It carries out the reaction a ribonucleoside 5'-triphosphate + H2O = a ribonucleoside 5'-phosphate + diphosphate + H(+). The catalysed reaction is a 2'-deoxyribonucleoside 5'-triphosphate + H2O = a 2'-deoxyribonucleoside 5'-phosphate + diphosphate + H(+). Its function is as follows. Nucleoside triphosphate pyrophosphatase. May have a dual role in cell division arrest and in preventing the incorporation of modified nucleotides into cellular nucleic acids. This is Nucleoside triphosphate pyrophosphatase from Legionella pneumophila (strain Corby).